The primary structure comprises 103 residues: Small ribosomal subunit protein uS10 (103 aa).

Belongs to the universal ribosomal protein uS10 family. As to quaternary structure, part of the 30S ribosomal subunit.

Involved in the binding of tRNA to the ribosomes. The protein is Small ribosomal subunit protein uS10 of Xylella fastidiosa (strain M12).